Reading from the N-terminus, the 734-residue chain is Photosystem I P700 chlorophyll a apoprotein A2 (734 aa).

Transmembrane regions (helical) follow at residues 46 to 69 (IFAS…FHVA), 135 to 158 (LYTG…LHLQ), 175 to 199 (LNHH…HVAI), 273 to 291 (MAHH…GHMY), 330 to 353 (LHMQ…QHMY), 369 to 395 (ASLY…IFFV), 417 to 439 (AIIS…LYVH), and 517 to 535 (FLVH…LILV). C559 and C568 together coordinate [4Fe-4S] cluster. The next 2 membrane-spanning stretches (helical) occupy residues 575 to 596 (AFYL…YWHW) and 643 to 665 (LSVW…MFLI). 3 residues coordinate chlorophyll a: H654, M662, and Y670. A phylloquinone-binding site is contributed by W671. Residues 707 to 727 (LVGLAHFSVGYVLTYAAFVLA) form a helical membrane-spanning segment.

It belongs to the PsaA/PsaB family. The PsaA/B heterodimer binds the P700 chlorophyll special pair and subsequent electron acceptors. PSI consists of a core antenna complex that captures photons, and an electron transfer chain that converts photonic excitation into a charge separation. The eukaryotic PSI reaction center is composed of at least 11 subunits. The cofactor is P700 is a chlorophyll a/chlorophyll a' dimer, A0 is one or more chlorophyll a, A1 is one or both phylloquinones and FX is a shared 4Fe-4S iron-sulfur center..

Its subcellular location is the plastid. The protein localises to the chloroplast thylakoid membrane. The enzyme catalyses reduced [plastocyanin] + hnu + oxidized [2Fe-2S]-[ferredoxin] = oxidized [plastocyanin] + reduced [2Fe-2S]-[ferredoxin]. Functionally, psaA and PsaB bind P700, the primary electron donor of photosystem I (PSI), as well as the electron acceptors A0, A1 and FX. PSI is a plastocyanin/cytochrome c6-ferredoxin oxidoreductase, converting photonic excitation into a charge separation, which transfers an electron from the donor P700 chlorophyll pair to the spectroscopically characterized acceptors A0, A1, FX, FA and FB in turn. Oxidized P700 is reduced on the lumenal side of the thylakoid membrane by plastocyanin or cytochrome c6. This chain is Photosystem I P700 chlorophyll a apoprotein A2, found in Porphyra purpurea (Red seaweed).